The primary structure comprises 361 residues: Phosphoserine aminotransferase (361 aa).

Residues Ser9 and Arg42 each contribute to the L-glutamate site. Pyridoxal 5'-phosphate contacts are provided by residues 76–77, Trp102, Thr153, Asp173, and Gln196; that span reads AR. At Lys197 the chain carries N6-(pyridoxal phosphate)lysine. 238-239 is a pyridoxal 5'-phosphate binding site; the sequence is NT.

The protein belongs to the class-V pyridoxal-phosphate-dependent aminotransferase family. SerC subfamily. In terms of assembly, homodimer. Pyridoxal 5'-phosphate is required as a cofactor.

Its subcellular location is the cytoplasm. It carries out the reaction O-phospho-L-serine + 2-oxoglutarate = 3-phosphooxypyruvate + L-glutamate. It catalyses the reaction 4-(phosphooxy)-L-threonine + 2-oxoglutarate = (R)-3-hydroxy-2-oxo-4-phosphooxybutanoate + L-glutamate. The protein operates within amino-acid biosynthesis; L-serine biosynthesis; L-serine from 3-phospho-D-glycerate: step 2/3. It functions in the pathway cofactor biosynthesis; pyridoxine 5'-phosphate biosynthesis; pyridoxine 5'-phosphate from D-erythrose 4-phosphate: step 3/5. Catalyzes the reversible conversion of 3-phosphohydroxypyruvate to phosphoserine and of 3-hydroxy-2-oxo-4-phosphonooxybutanoate to phosphohydroxythreonine. The sequence is that of Phosphoserine aminotransferase from Sodalis glossinidius (strain morsitans).